The following is a 162-amino-acid chain: Phospholipase A and acyltransferase 2 (162 aa).

Over 1–133 (MALARPRPRL…VSRSDQVTGA (133 aa)) the chain is Cytoplasmic. Residues 13-129 (LIEISRFGYA…LRYGVSRSDQ (117 aa)) form the LRAT domain. Residues histidine 23 and histidine 35 contribute to the active site. The active-site Acyl-thioester intermediate is the cysteine 113. A helical transmembrane segment spans residues 134–154 (VTTVGVAAGLLAAASLVGILL). The Lumenal segment spans residues 155-162 (ARSKRERQ).

Belongs to the H-rev107 family. As to expression, expressed in liver, kidney, small intestine testis and colon. Undetectable in testis, placenta, salivary gland and fetal brain.

Its subcellular location is the cytoplasm. It is found in the membrane. The catalysed reaction is a 1,2-diacyl-sn-glycero-3-phosphocholine + H2O = a 1-acyl-sn-glycero-3-phosphocholine + a fatty acid + H(+). It carries out the reaction a 1,2-diacyl-sn-glycero-3-phosphocholine + H2O = a 2-acyl-sn-glycero-3-phosphocholine + a fatty acid + H(+). It catalyses the reaction a 1,2-diacyl-sn-glycero-3-phosphoethanolamine + a 1,2-diacyl-sn-glycero-3-phosphocholine = an N-acyl-1,2-diacyl-sn-glycero-3-phosphoethanolamine + a 1-acyl-sn-glycero-3-phosphocholine + H(+). The enzyme catalyses a 1,2-diacyl-sn-glycero-3-phosphoethanolamine + a 1,2-diacyl-sn-glycero-3-phosphocholine = an N-acyl-1,2-diacyl-sn-glycero-3-phosphoethanolamine + a 2-acyl-sn-glycero-3-phosphocholine + H(+). The catalysed reaction is 1,2-dihexadecanoyl-sn-glycero-3-phosphocholine + H2O = 1-hexadecanoyl-sn-glycero-3-phosphocholine + hexadecanoate + H(+). It carries out the reaction 1,2-dihexadecanoyl-sn-glycero-3-phosphocholine + H2O = 2-hexadecanoyl-sn-glycero-3-phosphocholine + hexadecanoate + H(+). It catalyses the reaction 1-hexadecanoyl-2-(9Z-octadecenoyl)-sn-glycero-3-phosphocholine + H2O = 2-(9Z-octadecenoyl)-sn-glycero-3-phosphocholine + hexadecanoate + H(+). The enzyme catalyses 1-hexadecanoyl-2-(9Z-octadecenoyl)-sn-glycero-3-phosphocholine + H2O = 1-hexadecanoyl-sn-glycero-3-phosphocholine + (9Z)-octadecenoate + H(+). The catalysed reaction is 1-hexadecanoyl-2-(5Z,8Z,11Z,14Z-eicosatetraenoyl)-sn-glycero-3-phosphocholine + H2O = 2-(5Z,8Z,11Z,14Z)-eicosatetraenoyl-sn-glycero-3-phosphocholine + hexadecanoate + H(+). It carries out the reaction 1-hexadecanoyl-2-(9Z,12Z-octadecadienoyl)-sn-glycero-3-phosphoethanolamine + H2O = 1-hexadecanoyl-sn-glycero-3-phosphoethanolamine + (9Z,12Z)-octadecadienoate + H(+). It catalyses the reaction 1-hexadecanoyl-2-(9Z,12Z-octadecadienoyl)-sn-glycero-3-phosphoethanolamine + H2O = 2-(9Z,12Z)-octadecadienoyl-sn-glycero-3-phosphoethanolamine + hexadecanoate + H(+). The enzyme catalyses 1-hexadecanoyl-2-(5Z,8Z,11Z,14Z-eicosatetraenoyl)-sn-glycero-3-phosphoethanolamine + H2O = 1-hexadecanoyl-sn-glycero-3-phosphoethanolamine + (5Z,8Z,11Z,14Z)-eicosatetraenoate + H(+). The catalysed reaction is 1-hexadecanoyl-2-(5Z,8Z,11Z,14Z-eicosatetraenoyl)-sn-glycero-3-phosphoethanolamine + H2O = 2-(5Z,8Z,11Z,14Z)-eicosatetraenoyl-sn-glycero-3-phosphoethanolamine + hexadecanoate + H(+). It carries out the reaction 1,2-di-(9Z-octadecenoyl)-sn-glycero-3-phosphoethanolamine + 1,2-dihexadecanoyl-sn-glycero-3-phosphocholine = N-hexadecanoyl-1,2-di-(9Z-octadecenoyl)-sn-glycero-3-phosphoethanolamine + 2-hexadecanoyl-sn-glycero-3-phosphocholine + H(+). It catalyses the reaction 1,2-di-(9Z-octadecenoyl)-sn-glycero-3-phosphoethanolamine + 1,2-dihexadecanoyl-sn-glycero-3-phosphocholine = N-hexadecanoyl-1,2-di-(9Z-octadecenoyl)-sn-glycero-3-phosphoethanolamine + 1-hexadecanoyl-sn-glycero-3-phosphocholine + H(+). The enzyme catalyses 1-hexanoyl-2-acyl-sn-glycero-3-phosphocholine + H2O = 1-hexanoyl-sn-glycero-3-phosphocholine + a fatty acid + H(+). The catalysed reaction is 1,2-diheptadecanoyl-sn-glycero-3-phosphoethanolamine + 1-(9Z-octadecenoyl)-2-hexadecanoyl-sn-glycero-3-phosphocholine = 1,2-diheptadecanoyl-sn-glycero-3-phospho-N-hexadecanoyl-ethanolamine + 1-(9Z-octadecenoyl)-sn-glycero-3-phosphocholine + H(+). It carries out the reaction 1,2-diheptadecanoyl-sn-glycero-3-phosphoethanolamine + 1-(9Z-octadecenoyl)-2-hexadecanoyl-sn-glycero-3-phosphocholine = 1,2-diheptadecanoyl-sn-glycero-3-phospho-N-(9Z-octadecenoyl)-ethanolamine + 2-hexadecanoyl-sn-glycero-3-phosphocholine + H(+). It catalyses the reaction 1,2-dihexanoyl-sn-glycero-3-phosphocholine + 1,2-diheptanoyl-sn-glycero-3-phosphocholine = 1-heptanoyl-2-hexanoyl-sn-glycero-3-phosphocholine + 1-hexanoyl-2-heptanoyl-sn-glycero-3-phosphocholine. The enzyme catalyses 1,2-diheptanoyl-sn-glycero-3-phosphocholine + 1,2-dihexadecanoyl-sn-glycero-3-phosphocholine = 1-hexadecanoyl-2-heptanoyl-sn-glycero-3-phosphocholine + 1-heptanoyl-2-hexadecanoyl-sn-glycero-3-phosphocholine. The catalysed reaction is 1,2-dihexanoyl-sn-glycero-3-phosphoethanolamine + 1,2-diheptanoyl-sn-glycero-3-phosphocholine = 1-heptanoyl-2-hexanoyl-sn-glycero-3-phosphoethanolamine + 1-hexanoyl-2-heptanoyl-sn-glycero-3-phosphocholine. It carries out the reaction 1-hexanoyl-2-acyl-sn-glycero-3-phosphocholine + H2O = hexanoate + a 2-acyl-sn-glycero-3-phosphocholine + H(+). It catalyses the reaction 1,2-dihexanoyl-sn-glycero-3-phosphoethanolamine + 2-heptanoyl-sn-glycero-3-phosphocholine = hexanoyl-sn-glycero-3-phosphoethanolamine + 1-hexanoyl-2-heptanoyl-sn-glycero-3-phosphocholine. Its function is as follows. Exhibits both phospholipase A1/2 and acyltransferase activities. Shows phospholipase A1 (PLA1) and A2 (PLA2) activity, catalyzing the calcium-independent release of fatty acids from the sn-1 or sn-2 position of glycerophospholipids. For most substrates, PLA1 activity is much higher than PLA2 activity. Shows O-acyltransferase activity, catalyzing the transfer of a fatty acyl group from glycerophospholipid to the hydroxyl group of lysophospholipid. Shows N-acyltransferase activity, catalyzing the calcium-independent transfer of a fatty acyl group at the sn-1 position of phosphatidylcholine (PC) and other glycerophospholipids to the primary amine of phosphatidylethanolamine (PE), forming N-acylphosphatidylethanolamine (NAPE), which serves as precursor for N-acylethanolamines (NAEs). Catalyzes N-acylation of PE using both sn-1 and sn-2 palmitoyl groups of PC as acyl donor. Exhibits high phospholipase A1/2 activity and low N-acyltransferase activity. This Homo sapiens (Human) protein is Phospholipase A and acyltransferase 2.